Consider the following 386-residue polypeptide: Succinate--CoA ligase [ADP-forming] subunit beta (386 aa).

Positions Lys-9–Glu-244 constitute an ATP-grasp domain. ATP-binding positions include Lys-46, Gly-53 to Gly-55, Glu-99, Cys-102, and Glu-107. Positions 199 and 213 each coordinate Mg(2+). Substrate contacts are provided by residues Asn-264 and Gly-321 to Met-323.

This sequence belongs to the succinate/malate CoA ligase beta subunit family. In terms of assembly, heterotetramer of two alpha and two beta subunits. Mg(2+) is required as a cofactor.

The catalysed reaction is succinate + ATP + CoA = succinyl-CoA + ADP + phosphate. The enzyme catalyses GTP + succinate + CoA = succinyl-CoA + GDP + phosphate. It participates in carbohydrate metabolism; tricarboxylic acid cycle; succinate from succinyl-CoA (ligase route): step 1/1. Succinyl-CoA synthetase functions in the citric acid cycle (TCA), coupling the hydrolysis of succinyl-CoA to the synthesis of either ATP or GTP and thus represents the only step of substrate-level phosphorylation in the TCA. The beta subunit provides nucleotide specificity of the enzyme and binds the substrate succinate, while the binding sites for coenzyme A and phosphate are found in the alpha subunit. In Geobacillus kaustophilus (strain HTA426), this protein is Succinate--CoA ligase [ADP-forming] subunit beta.